The chain runs to 316 residues: MHNFLESEKAIHELEGKIIELINFADKNKVDLTYEIEILSQKLEQMQKEMYENLNPWSKVKLARLQERPTTLDYIEKLISGFTEFHGDRFYGDDTAIVGGIGLFEGIPVTVIGHQKGKDTKDNIRRNFGMPHPEGYRKALRLMKQAEKFKRPILTFIDTSGAYCGIGAEERGQGEAIAVNLIEMSKLKTPIIAIVIGEGGSGGALALGIGDRVCMLEHSIYSVISPEGLSTILWKDATLAQRAADMMQLTAQDLWSMKVIDQVIKEPLGGAHKNADLVADQIKTYVLQELKDLRMLKTEELLEKRYTKIRNIGIWK.

One can recognise a CoA carboxyltransferase C-terminal domain in the interval 35 to 292; the sequence is EIEILSQKLE…KTYVLQELKD (258 aa).

It belongs to the AccA family. As to quaternary structure, acetyl-CoA carboxylase is a heterohexamer composed of biotin carboxyl carrier protein (AccB), biotin carboxylase (AccC) and two subunits each of ACCase subunit alpha (AccA) and ACCase subunit beta (AccD).

It is found in the cytoplasm. The enzyme catalyses N(6)-carboxybiotinyl-L-lysyl-[protein] + acetyl-CoA = N(6)-biotinyl-L-lysyl-[protein] + malonyl-CoA. It participates in lipid metabolism; malonyl-CoA biosynthesis; malonyl-CoA from acetyl-CoA: step 1/1. In terms of biological role, component of the acetyl coenzyme A carboxylase (ACC) complex. First, biotin carboxylase catalyzes the carboxylation of biotin on its carrier protein (BCCP) and then the CO(2) group is transferred by the carboxyltransferase to acetyl-CoA to form malonyl-CoA. In Alkaliphilus oremlandii (strain OhILAs) (Clostridium oremlandii (strain OhILAs)), this protein is Acetyl-coenzyme A carboxylase carboxyl transferase subunit alpha.